A 677-amino-acid polypeptide reads, in one-letter code: Envelope glycoprotein (677 aa).

A signal peptide spans 1–33 (MGSGYQLLQLPRERFRKTSFLVWVIILFQRAIS). Over 34–651 (MPLGIVTNST…DLNLWTGWRQ (618 aa)) the chain is Extracellular. An N-linked (GlcNAc...) asparagine; by host glycan is attached at asparagine 41. 5 disulfides stabilise this stretch: cysteine 54-cysteine 610, cysteine 109-cysteine 136, cysteine 122-cysteine 148, cysteine 512-cysteine 557, and cysteine 602-cysteine 609. The segment at 55–202 (RDKLSSTSQL…HFWKATPAHE (148 aa)) is receptor-binding. 12 N-linked (GlcNAc...) asparagine; by host glycosylation sites follow: asparagine 205, asparagine 239, asparagine 258, asparagine 269, asparagine 297, asparagine 317, asparagine 318, asparagine 339, asparagine 406, asparagine 420, asparagine 435, and asparagine 463. A mucin-like region region spans residues 306–486 (NLHFQILSTH…PSQPGFTINT (181 aa)). Residues 315–326 (HTNNSSDQSPAG) show a composition bias toward polar residues. Disordered stretches follow at residues 315–349 (HTNN…TDSP), 370–482 (NGET…QPGF), and 489–508 (KVAD…RQNT). 2 stretches are compositionally biased toward polar residues: residues 370 to 421 (NGET…ASNE) and 429 to 472 (NPIQ…TSPG). The tract at residues 525-540 (GAAVGLAWIPYFGPAA) is fusion peptide. A coiled-coil region spans residues 555-596 (LICGLRQLANETTQALQLFLRATTELRTYSLLNRKAIDFLLQ). Asparagine 564 carries an N-linked (GlcNAc...) asparagine; by host glycan. Residues 616–635 (WTKNITDEINQIKHDFIDNP) are a coiled coil. N-linked (GlcNAc...) asparagine; by host glycosylation is present at asparagine 619. Residues 652–672 (WIPAGIGIIGVIIAIIALLCI) form a helical membrane-spanning segment. S-palmitoyl cysteine; by host attachment occurs at residues cysteine 671 and cysteine 673. Residues 673–677 (CKILC) are Cytoplasmic-facing.

It belongs to the filoviruses glycoprotein family. As to quaternary structure, homotrimer; each monomer consists of a GP1 and a GP2 subunit linked by disulfide bonds. The resulting peplomers (GP1,2) protrude from the virus surface as spikes. Interacts with host integrin alpha-V/ITGAV. Interacts with host CLEC10A. Binds also to host CD209 and CLEC4M/DC-SIGN(R). Interacts with host FOLR1. Interacts with BST2; this interaction inhibits the antiviral effect of BST2 and this allows viral release from infected cells. Interacts with host FCN1; this interaction enhances viral entry. Interacts with host TLR4; this interaction induces cell death in T-lymphocytes or proinflammatory cytokines and SOCS1 production in monocytes. In terms of assembly, interacts with host entry receptor NPC1. GP1 and GP2delta are part of GP1,2delta soluble complexes released by ectodomain shedding. The signal peptide region modulates GP's high mannose glycosylation, thereby determining the efficiency of the interactions with DC-SIGN(R). Post-translationally, N-glycosylated. In terms of processing, O-glycosylated in the mucin-like region. Palmitoylation of GP2 is not required for its function. Post-translationally, specific enzymatic cleavages in vivo yield mature proteins. The precursor is processed into GP1 and GP2 by host cell furin in the trans Golgi, and maybe by other host proteases, to yield the mature GP1 and GP2 proteins. The cleavage site corresponds to the furin optimal cleavage sequence [KR]-X-[KR]-R. This cleavage does not seem to be required for function. After the internalization of the virus into cell endosomes, GP1 C-terminus is removed by the endosomal proteases cathepsin B, cathepsin L, or both, leaving a 19-kDa N-terminal fragment which is further digested by cathepsin B. Proteolytic processing of GP1,2 by host ADAM17 can remove the transmembrane anchor of GP2 and leads to shedding of complexes consisting in GP1 and truncated GP2 (GP1,2delta).

The protein localises to the virion membrane. The protein resides in the host cell membrane. It is found in the secreted. Trimeric GP1,2 complexes form the virion surface spikes and mediate the viral entry processes, with GP1 acting as the receptor-binding subunit and GP2 as the membrane fusion subunit. At later times of infection, down-regulates the expression of various host cell surface molecules that are essential for immune surveillance and cell adhesion. Down-modulates several integrins including ITGA1, ITGA2, ITGA3, ITGA4, ITGA5, ITGA6, ITGAV and ITGB1. This decrease in cell adhesion molecules may lead to cell detachment, contributing to the disruption of blood vessel integrity and hemorrhages developed during infection (cytotoxicity). Interacts with host TLR4 and thereby stimulates the differentiation and activation of monocytes leading to bystander death of T-lymphocytes. Down-regulates as well the function of host natural killer cells. Counteracts the antiviral effect of host BST2/tetherin that restricts release of progeny virions from infected cells. However, cooperates with VP40 and host BST2 to activate canonical NF-kappa-B pathway in a manner dependent on neddylation. Functionally, functions as a decoy for anti-GP1,2 antibodies thereby contributing to viral immune evasion. Interacts and activates host macrophages and dendritic cells inducing up-regulation of cytokine transcription. This effect is mediated throught activation of host TLR4. In terms of biological role, responsible for binding to the receptor(s) on target cells. Interacts with CD209/DC-SIGN and CLEC4M/DC-SIGNR which act as cofactors for virus entry into dendritic cells (DCs) and endothelial cells. Binding to the macrophage specific lectin CLEC10A also seems to enhance virus infectivity. Interaction with FOLR1/folate receptor alpha may be a cofactor for virus entry in some cell types, although results are contradictory. Members of the Tyro3 receptor tyrosine kinase family also seem to be cell entry factors in filovirus infection. Once attached, the virions are internalized through clathrin-dependent endocytosis and/or macropinocytosis. After internalization of the virus into the endosomes of the host cell, proteolysis of GP1 by two cysteine proteases, CTSB/cathepsin B and CTSL/cathepsin L removes the glycan cap and allows GP1 binding to the host entry receptor NPC1. NPC1-binding, Ca(2+) and acidic pH induce a conformational change of GP2, which unmasks its fusion peptide and permit membranes fusion. Its function is as follows. Acts as a class I viral fusion protein. Under the current model, the protein has at least 3 conformational states: pre-fusion native state, pre-hairpin intermediate state, and post-fusion hairpin state. During viral and target cell membrane fusion, the coiled coil regions (heptad repeats) assume a trimer-of-hairpins structure, positioning the fusion peptide in close proximity to the C-terminal region of the ectodomain. The formation of this structure appears to drive apposition and subsequent fusion of viral and target cell membranes. Responsible for penetration of the virus into the cell cytoplasm by mediating the fusion of the membrane of the endocytosed virus particle with the endosomal membrane. Low pH in endosomes induces an irreversible conformational change in GP2, releasing the fusion hydrophobic peptide. The sequence is that of Envelope glycoprotein (GP) from Homo sapiens (Human).